Reading from the N-terminus, the 416-residue chain is Esterase FrsA (416 aa).

The disordered stretch occupies residues 19 to 39 (ETSTLVRRTRHDQETQGLHST).

It belongs to the FrsA family.

The catalysed reaction is a carboxylic ester + H2O = an alcohol + a carboxylate + H(+). Catalyzes the hydrolysis of esters. In Pectobacterium atrosepticum (strain SCRI 1043 / ATCC BAA-672) (Erwinia carotovora subsp. atroseptica), this protein is Esterase FrsA.